Consider the following 143-residue polypeptide: Flagellar assembly factor FliW (143 aa).

It belongs to the FliW family. As to quaternary structure, interacts with translational regulator CsrA and flagellin(s).

The protein localises to the cytoplasm. In terms of biological role, acts as an anti-CsrA protein, binds CsrA and prevents it from repressing translation of its target genes, one of which is flagellin. Binds to flagellin and participates in the assembly of the flagellum. The chain is Flagellar assembly factor FliW from Clostridium botulinum (strain 657 / Type Ba4).